The following is a 482-amino-acid chain: Probable glycine dehydrogenase (decarboxylating) subunit 2 (482 aa).

Lys264 carries the post-translational modification N6-(pyridoxal phosphate)lysine.

The protein belongs to the GcvP family. C-terminal subunit subfamily. In terms of assembly, the glycine cleavage system is composed of four proteins: P, T, L and H. In this organism, the P 'protein' is a heterodimer of two subunits. Pyridoxal 5'-phosphate serves as cofactor.

The catalysed reaction is N(6)-[(R)-lipoyl]-L-lysyl-[glycine-cleavage complex H protein] + glycine + H(+) = N(6)-[(R)-S(8)-aminomethyldihydrolipoyl]-L-lysyl-[glycine-cleavage complex H protein] + CO2. The glycine cleavage system catalyzes the degradation of glycine. The P protein binds the alpha-amino group of glycine through its pyridoxal phosphate cofactor; CO(2) is released and the remaining methylamine moiety is then transferred to the lipoamide cofactor of the H protein. The sequence is that of Probable glycine dehydrogenase (decarboxylating) subunit 2 from Treponema denticola (strain ATCC 35405 / DSM 14222 / CIP 103919 / JCM 8153 / KCTC 15104).